The primary structure comprises 208 residues: WEB family protein At2g17940 (208 aa).

Residues 78–113 (RTLQLNTSLSNRIKTLTQELELGKKEIQRLSRTRSS) adopt a coiled-coil conformation.

It belongs to the WEB family.

This Arabidopsis thaliana (Mouse-ear cress) protein is WEB family protein At2g17940.